The sequence spans 149 residues: Urease accessory protein UreE (149 aa).

The protein belongs to the UreE family.

The protein localises to the cytoplasm. Functionally, involved in urease metallocenter assembly. Binds nickel. Probably functions as a nickel donor during metallocenter assembly. The sequence is that of Urease accessory protein UreE from Prochlorococcus marinus (strain AS9601).